Consider the following 240-residue polypeptide: Aliphatic sulfonates import ATP-binding protein SsuB 2 (240 aa).

The ABC transporter domain occupies 2–218; it reads VRTRELRRGF…RHSAPEFIHA (217 aa). 34–41 contacts ATP; sequence GRSGSGKS.

This sequence belongs to the ABC transporter superfamily. Aliphatic sulfonates importer (TC 3.A.1.17.2) family. As to quaternary structure, the complex is composed of two ATP-binding proteins (SsuB), two transmembrane proteins (SsuC) and a solute-binding protein (SsuA).

The protein localises to the cell membrane. The catalysed reaction is ATP + H2O + aliphatic sulfonate-[sulfonate-binding protein]Side 1 = ADP + phosphate + aliphatic sulfonateSide 2 + [sulfonate-binding protein]Side 1.. Its function is as follows. Part of the ABC transporter complex SsuABC involved in aliphatic sulfonates import. Responsible for energy coupling to the transport system. The polypeptide is Aliphatic sulfonates import ATP-binding protein SsuB 2 (Nocardia farcinica (strain IFM 10152)).